The sequence spans 402 residues: Flavohemoprotein (402 aa).

Residues 1–138 (MLSPEVRALV…LADLLIGRER (138 aa)) enclose the Globin domain. Heme b is bound at residue His-85. Catalysis depends on charge relay system residues Tyr-95 and Glu-137. The reductase stretch occupies residues 149–402 (GGWTGWRAFK…AEVFGTGGVA (254 aa)). Residues 152–261 (TGWRAFKVVR…SPPQGDFTLD (110 aa)) form the FAD-binding FR-type domain. FAD-binding positions include Tyr-190 and 206–209 (RQYS). Residue 274–279 (GVGLTP) coordinates NADP(+). 395–398 (VFGT) provides a ligand contact to FAD.

This sequence belongs to the globin family. Two-domain flavohemoproteins subfamily. It in the C-terminal section; belongs to the flavoprotein pyridine nucleotide cytochrome reductase family. Heme b serves as cofactor. Requires FAD as cofactor.

The enzyme catalyses 2 nitric oxide + NADPH + 2 O2 = 2 nitrate + NADP(+) + H(+). It carries out the reaction 2 nitric oxide + NADH + 2 O2 = 2 nitrate + NAD(+) + H(+). Functionally, is involved in NO detoxification in an aerobic process, termed nitric oxide dioxygenase (NOD) reaction that utilizes O(2) and NAD(P)H to convert NO to nitrate, which protects the bacterium from various noxious nitrogen compounds. Therefore, plays a central role in the inducible response to nitrosative stress. The polypeptide is Flavohemoprotein (Bordetella bronchiseptica (strain ATCC BAA-588 / NCTC 13252 / RB50) (Alcaligenes bronchisepticus)).